The chain runs to 876 residues: Alanine--tRNA ligase (876 aa).

Residue lysine 74 is modified to N6-acetyllysine. Zn(2+) contacts are provided by histidine 564, histidine 568, cysteine 666, and histidine 670.

The protein belongs to the class-II aminoacyl-tRNA synthetase family. Homotetramer. Zn(2+) is required as a cofactor.

Its subcellular location is the cytoplasm. The catalysed reaction is tRNA(Ala) + L-alanine + ATP = L-alanyl-tRNA(Ala) + AMP + diphosphate. Catalyzes the attachment of alanine to tRNA(Ala) in a two-step reaction: alanine is first activated by ATP to form Ala-AMP and then transferred to the acceptor end of tRNA(Ala). Also edits incorrectly charged Ser-tRNA(Ala) and Gly-tRNA(Ala) via its editing domain. In Escherichia coli O9:H4 (strain HS), this protein is Alanine--tRNA ligase.